Reading from the N-terminus, the 67-residue chain is Pepsin B (67 aa).

Residues 1–43 (MERIILRKGKSIREAMEEQGVLEKFLKNRPKIDPAAKYHFNND) constitute a propeptide, activation peptide.

This sequence belongs to the peptidase A1 family.

It is found in the secreted. The catalysed reaction is Degradation of gelatin, little activity on hemoglobin. Specificity on B chain of insulin more restricted than that of pepsin A. Does not cleave 1-Phe-|-Val-2, 4-Gln-|-His-5 or 23-Gly-|-Phe-24.. The polypeptide is Pepsin B (PGB) (Sus scrofa (Pig)).